The following is a 469-amino-acid chain: Glutamate--tRNA ligase (469 aa).

A 'HIGH' region motif is present at residues 11-21 (PSPTGFIHLGN). Basic and acidic residues predominate over residues 118 to 131 (GEKPRYDGTWRPEP). The disordered stretch occupies residues 118-139 (GEKPRYDGTWRPEPGKVLPEPP). A 'KMSKS' region motif is present at residues 243–247 (KMSKR). Position 246 (lysine 246) interacts with ATP.

The protein belongs to the class-I aminoacyl-tRNA synthetase family. Glutamate--tRNA ligase type 1 subfamily. As to quaternary structure, monomer.

Its subcellular location is the cytoplasm. The enzyme catalyses tRNA(Glu) + L-glutamate + ATP = L-glutamyl-tRNA(Glu) + AMP + diphosphate. Functionally, catalyzes the attachment of glutamate to tRNA(Glu) in a two-step reaction: glutamate is first activated by ATP to form Glu-AMP and then transferred to the acceptor end of tRNA(Glu). In Burkholderia mallei (strain NCTC 10247), this protein is Glutamate--tRNA ligase.